The sequence spans 332 residues: Solute carrier family 25 member 16 (332 aa).

Solcar repeat units lie at residues 34-120, 128-216, and 238-328; these read FYWL…YKTL, SGHV…LKSV, and LKTH…MKQF. A run of 6 helical transmembrane segments spans residues 37 to 57, 88 to 108, 134 to 154, 191 to 211, 244 to 264, and 299 to 319; these read LRSF…VAPL, GFLG…PYGA, LMAG…LDMV, GLMP…FTFG, LLCG…FDVT, and GLYR…AVAF.

The protein belongs to the mitochondrial carrier (TC 2.A.29) family.

It localises to the mitochondrion inner membrane. In terms of biological role, may be involved in the transport of coenzyme A in the mitochondrial matrix. Very little is known about the physiological function of this carrier. The sequence is that of Solute carrier family 25 member 16 from Homo sapiens (Human).